Here is a 611-residue protein sequence, read N- to C-terminus: Rop guanine nucleotide exchange factor 5 (611 aa).

The tract at residues 1–62 (MENLVKSCAG…PPPPPSQILG (62 aa)) is disordered. Low complexity predominate over residues 34–51 (STSGASYESSSTTTVASS). In terms of domain architecture, PRONE spans 93–477 (FKAKEMNSAD…DLTKQSDDNN (385 aa)). Disordered stretches follow at residues 513-541 (TTPG…TNKI) and 588-611 (DVEE…YTVS). Positions 525 to 541 (KKGERRTPYSSKDTNKI) are enriched in basic and acidic residues.

Functionally, guanine-nucleotide exchange factor (GEF) that acts as an activator of Rop (Rho of plants) GTPases by promoting the exchange of GDP for GTP. This chain is Rop guanine nucleotide exchange factor 5 (ROPGEF5), found in Arabidopsis thaliana (Mouse-ear cress).